We begin with the raw amino-acid sequence, 882 residues long: Protein O-mannosyl-transferase TMTC1 (882 aa).

At 1-20 (MVVTTSARGGGGDRTPSRRR) the chain is on the cytoplasmic side. Positions 1–20 (MVVTTSARGGGGDRTPSRRR) are disordered. Residues 21–41 (GCGLAPAGAAALLAGASCLCY) form a helical membrane-spanning segment. Over 42–110 (GRSLQGEFVH…KLNIFLTGMN (69 aa)) the chain is Extracellular. N-linked (GlcNAc...) asparagine glycosylation is present at asparagine 86. Residues 111–131 (PFYFHAVNIILHCLVTLVLMY) form a helical membrane-spanning segment. The Cytoplasmic segment spans residues 132–137 (TCDKTV). A helical transmembrane segment spans residues 138 to 157 (FKNRGLAFVTALLFAVHPIH). Topologically, residues 158 to 160 (TEA) are extracellular. The helical transmembrane segment at 161 to 181 (VAGIVGRADVLACLLFLLAFL) threads the bilayer. The Cytoplasmic portion of the chain corresponds to 182 to 197 (SYNRSLDQGCVGGSFP). The helical transmembrane segment at 198–218 (STVSPFFLLLSLFLGTCAMLV) threads the bilayer. Residues 219–221 (KET) are Extracellular-facing. The chain crosses the membrane as a helical span at residues 222–238 (GITVFGVCLVYDLFSLS). Residues 239–313 (NKQDKSSNGA…SPRAVWSMMR (75 aa)) are Cytoplasmic-facing. A disordered region spans residues 246-277 (NGALCPRSPQQPGSPQPSSLPGHPHRENGKQQ). Residues 251–267 (PRSPQQPGSPQPSSLPG) are compositionally biased toward low complexity. A helical transmembrane segment spans residues 314–334 (FLTYSYLLAFNVWLLLAPVTL). At 335-354 (CYDWQVGSIPLVETIWDMRN) the chain is on the extracellular side. The helical transmembrane segment at 355–375 (LATIFLAVVMALLSLHCLAAF) threads the bilayer. Residues 376–381 (KRLEHK) are Cytoplasmic-facing. Residues 382-402 (EVLVGLLFLVFPFIPASNLFF) form a helical membrane-spanning segment. A topological domain (extracellular) is located at residue arginine 403. Residues 404-424 (VGFVVAERVLYMPSMGYCILF) form a helical membrane-spanning segment. The Cytoplasmic segment spans residues 425–438 (VHGLSKLCTWLNRC). A helical transmembrane segment spans residues 439-459 (GATTLIVSTVLLLLLFSWKTV). At 460-882 (KQNEIWLSRE…LQEVREKDQT (423 aa)) the chain is on the extracellular side. 10 TPR repeats span residues 483 to 516 (AKVH…YPRH), 517 to 547 (ASAL…HPQH), 548 to 581 (NRAL…GPEF), 582 to 615 (ADAY…CPDS), 616 to 649 (SDLH…SPSH), 650 to 682 (HVAM…VAHK), 683 to 716 (AEIL…QPSQ), 751 to 784 (LECY…KPKD), 789 to 822 (SELF…NPDQ), and 823 to 856 (AQAW…VPDS).

This sequence belongs to the TMTC family. In terms of assembly, may interact with FAM168B.

Its subcellular location is the membrane. The protein localises to the endoplasmic reticulum. The enzyme catalyses a di-trans,poly-cis-dolichyl beta-D-mannosyl phosphate + L-seryl-[protein] = 3-O-(alpha-D-mannosyl)-L-seryl-[protein] + a di-trans,poly-cis-dolichyl phosphate + H(+). It carries out the reaction a di-trans,poly-cis-dolichyl beta-D-mannosyl phosphate + L-threonyl-[protein] = 3-O-(alpha-D-mannosyl)-L-threonyl-[protein] + a di-trans,poly-cis-dolichyl phosphate + H(+). It participates in protein modification; protein glycosylation. Transfers mannosyl residues to the hydroxyl group of serine or threonine residues. The 4 members of the TMTC family are O-mannosyl-transferases dedicated primarily to the cadherin superfamily, each member seems to have a distinct role in decorating the cadherin domains with O-linked mannose glycans at specific regions. Also acts as O-mannosyl-transferase on other proteins such as PDIA3. The chain is Protein O-mannosyl-transferase TMTC1 from Homo sapiens (Human).